A 423-amino-acid polypeptide reads, in one-letter code: GPI mannosyltransferase 2 (423 aa).

Transmembrane regions (helical) follow at residues 11 to 31 (ILSLTSIFAAWKSFLLAIALG), 106 to 126 (WEALVAIAISHVSHLVAVLAL), 139 to 159 (LAYLASVVHVLSPAGLFISAP), 160 to 180 (YAESPFACMSFVGNLLYAISL), 197 to 219 (GLSYGISCTLRSNGLFGGVLFAV), 240 to 260 (LVAPLIGGILVAVGFVAPQVL), 299 to 319 (YWTPNQIPLFLLAAPMLTILL), 351 to 371 (LAAIQTLLAVLAITNYHVQII), and 400 to 420 (GVIVFITMYAAIQGGLFASFL).

It belongs to the PIGV family.

Its subcellular location is the endoplasmic reticulum membrane. Its pathway is glycolipid biosynthesis; glycosylphosphatidylinositol-anchor biosynthesis. In terms of biological role, mannosyltransferase involved in glycosylphosphatidylinositol-anchor biosynthesis. Transfers the second mannose to the glycosylphosphatidylinositol during GPI precursor assembly. This chain is GPI mannosyltransferase 2 (GPI18), found in Gibberella zeae (strain ATCC MYA-4620 / CBS 123657 / FGSC 9075 / NRRL 31084 / PH-1) (Wheat head blight fungus).